A 230-amino-acid polypeptide reads, in one-letter code: Flagellar L-ring protein (230 aa).

The signal sequence occupies residues Met-1 to Gly-18. Cys-19 is lipidated: N-palmitoyl cysteine. Cys-19 carries the S-diacylglycerol cysteine lipid modification.

The protein belongs to the FlgH family. In terms of assembly, the basal body constitutes a major portion of the flagellar organelle and consists of four rings (L,P,S, and M) mounted on a central rod.

It is found in the cell outer membrane. The protein localises to the bacterial flagellum basal body. Its function is as follows. Assembles around the rod to form the L-ring and probably protects the motor/basal body from shearing forces during rotation. The sequence is that of Flagellar L-ring protein from Legionella pneumophila (strain Corby).